We begin with the raw amino-acid sequence, 252 residues long: Tabtoxin biosynthesis enzyme (252 aa).

A disordered region spans residues 1 to 23 (MYQRTATQLARKPASKQGETEMN).

Its function is as follows. May play a role in tabtoxin biosynthesis. The sequence is that of Tabtoxin biosynthesis enzyme (tblA) from Pseudomonas amygdali pv. tabaci (Pseudomonas syringae pv. tabaci).